A 322-amino-acid polypeptide reads, in one-letter code: Corticotropin-releasing factor-binding protein (322 aa).

The first 24 residues, 1–24 (MSPNFKLQCHFTLILLTALRGESR), serve as a signal peptide directing secretion. 5 disulfide bridges follow: cysteine 60-cysteine 81, cysteine 104-cysteine 141, cysteine 183-cysteine 205, cysteine 237-cysteine 264, and cysteine 277-cysteine 318. A glycan (N-linked (GlcNAc...) asparagine) is linked at asparagine 204.

The protein belongs to the CRF-binding protein family.

The protein localises to the secreted. Binds CRF and inactivates it. May prevent inappropriate pituitary-adrenal stimulation in pregnancy. This is Corticotropin-releasing factor-binding protein (Crhbp) from Rattus norvegicus (Rat).